Reading from the N-terminus, the 519-residue chain is tRNA-2-methylthio-N(6)-dimethylallyladenosine synthase (519 aa).

Residues 1-23 (MNEQQRKQQSQIRTEQANVDRIK) form a disordered region. Residues 7 to 17 (KQQSQIRTEQA) show a composition bias toward polar residues. An MTTase N-terminal domain is found at 76-194 (KKFLIRTYGC…LPHLVKEALF (119 aa)). Residues Cys-85, Cys-121, Cys-155, Cys-231, Cys-235, and Cys-238 each contribute to the [4Fe-4S] cluster site. The 234-residue stretch at 217-450 (RKGKIKAWVN…VNKQSAASMK (234 aa)) folds into the Radical SAM core domain. Residues 450–513 (KDYAGKKVKV…TWSLNGVMVE (64 aa)) enclose the TRAM domain.

The protein belongs to the methylthiotransferase family. MiaB subfamily. As to quaternary structure, monomer. It depends on [4Fe-4S] cluster as a cofactor.

It localises to the cytoplasm. It catalyses the reaction N(6)-dimethylallyladenosine(37) in tRNA + (sulfur carrier)-SH + AH2 + 2 S-adenosyl-L-methionine = 2-methylsulfanyl-N(6)-dimethylallyladenosine(37) in tRNA + (sulfur carrier)-H + 5'-deoxyadenosine + L-methionine + A + S-adenosyl-L-homocysteine + 2 H(+). In terms of biological role, catalyzes the methylthiolation of N6-(dimethylallyl)adenosine (i(6)A), leading to the formation of 2-methylthio-N6-(dimethylallyl)adenosine (ms(2)i(6)A) at position 37 in tRNAs that read codons beginning with uridine. This is tRNA-2-methylthio-N(6)-dimethylallyladenosine synthase from Oceanobacillus iheyensis (strain DSM 14371 / CIP 107618 / JCM 11309 / KCTC 3954 / HTE831).